The chain runs to 405 residues: Cytoplasmic polyadenylated homeobox-like protein (405 aa).

Disordered regions lie at residues 1-33 and 340-363; these read MNLD…KHRH and PWDL…QNNG. Positions 13-23 are enriched in basic and acidic residues; that stretch reads EEDHHNEERQT. Residues 24–33 show a composition bias toward basic residues; that stretch reads KNKRKTKHRH. The homeobox DNA-binding region spans 28–87; the sequence is KTKHRHKFSEELLQELKEIFGENCYPDYTTRKTLAIKFDCPVNVIDNWFQNKRARLPPAE. Low complexity predominate over residues 346–360; the sequence is QWSSAQSQLQSQLPQ.

It is found in the nucleus. In terms of biological role, transcription factor that acts as activator. This Homo sapiens (Human) protein is Cytoplasmic polyadenylated homeobox-like protein.